The sequence spans 184 residues: ATP synthase subunit b, chloroplastic (184 aa).

A helical transmembrane segment spans residues 27–49 (LATNLINLSVVLGVLIFFGKGVL).

The protein belongs to the ATPase B chain family. As to quaternary structure, F-type ATPases have 2 components, F(1) - the catalytic core - and F(0) - the membrane proton channel. F(1) has five subunits: alpha(3), beta(3), gamma(1), delta(1), epsilon(1). F(0) has four main subunits: a(1), b(1), b'(1) and c(10-14). The alpha and beta chains form an alternating ring which encloses part of the gamma chain. F(1) is attached to F(0) by a central stalk formed by the gamma and epsilon chains, while a peripheral stalk is formed by the delta, b and b' chains.

Its subcellular location is the plastid. The protein localises to the chloroplast thylakoid membrane. Functionally, f(1)F(0) ATP synthase produces ATP from ADP in the presence of a proton or sodium gradient. F-type ATPases consist of two structural domains, F(1) containing the extramembraneous catalytic core and F(0) containing the membrane proton channel, linked together by a central stalk and a peripheral stalk. During catalysis, ATP synthesis in the catalytic domain of F(1) is coupled via a rotary mechanism of the central stalk subunits to proton translocation. In terms of biological role, component of the F(0) channel, it forms part of the peripheral stalk, linking F(1) to F(0). This Nicotiana tabacum (Common tobacco) protein is ATP synthase subunit b, chloroplastic.